The sequence spans 363 residues: Cysteine proteinase 15A (363 aa).

The N-terminal stretch at methionine 1–alanine 18 is a signal peptide. Positions valine 19–asparagine 131 are cleaved as a propeptide — activation peptide. 2 disulfide bridges follow: cysteine 153/cysteine 203 and cysteine 187/cysteine 236. Cysteine 156 is an active-site residue. The N-linked (GlcNAc...) asparagine glycan is linked to asparagine 249. Cysteine 292 and cysteine 347 form a disulfide bridge. Residues histidine 299 and asparagine 326 contribute to the active site.

This sequence belongs to the peptidase C1 family.

The sequence is that of Cysteine proteinase 15A from Pisum sativum (Garden pea).